The primary structure comprises 581 residues: Aspartate--tRNA ligase (581 aa).

An L-aspartate-binding site is contributed by Glu170. The interval 194-197 is aspartate; that stretch reads QLFK. Arg216 is a binding site for L-aspartate. ATP contacts are provided by residues 216-218 and Gln225; that span reads RDE. His439 contacts L-aspartate. Position 468 (Glu468) interacts with ATP. An L-aspartate-binding site is contributed by Arg475. 520 to 523 contacts ATP; it reads GFDR.

It belongs to the class-II aminoacyl-tRNA synthetase family. Type 1 subfamily. Homodimer.

It localises to the cytoplasm. The catalysed reaction is tRNA(Asp) + L-aspartate + ATP = L-aspartyl-tRNA(Asp) + AMP + diphosphate. Functionally, catalyzes the attachment of L-aspartate to tRNA(Asp) in a two-step reaction: L-aspartate is first activated by ATP to form Asp-AMP and then transferred to the acceptor end of tRNA(Asp). The chain is Aspartate--tRNA ligase from Thermosipho melanesiensis (strain DSM 12029 / CIP 104789 / BI429).